The primary structure comprises 421 residues: RNase J-like protein (421 aa).

Residues His55, His57, Asp59, His60, His132, Asp153, and His389 each contribute to the Zn(2+) site.

Belongs to the metallo-beta-lactamase superfamily. RNA-metabolizing metallo-beta-lactamase-like family. Forms homodimers on heating to 60 degrees Celsius which may be the active form. Zn(2+) serves as cofactor.

With respect to regulation, inhibited by imidazole. In terms of biological role, a 5'-3' exoribonuclease with a strong reference for 5'-monophosphorylated RNA and no endoribonuclease activty. This chain is RNase J-like protein, found in Methanocaldococcus jannaschii (strain ATCC 43067 / DSM 2661 / JAL-1 / JCM 10045 / NBRC 100440) (Methanococcus jannaschii).